A 394-amino-acid polypeptide reads, in one-letter code: MNKKTLKDIDVKGKRVFCRVDFNVPMKDGKVTDETRIRAAIPTIQYLVEQGAKVILASHLGRPKGEVVEELRLNAVAERLQALLGKDVAKADEAFGEEVKKTIDGMSEGDVLVLENVRFYPGEEKNDPELAKAFAELADVYVNDAFGAAHRAHASTEGIAQHIPAVAGFLMEKELDVLSKALSNPERPFTAIVGGAKVKDKIGVIDHLLDKVDNLIIGGGLSYTFIKALGHEVGKSLLEEDKIELAKSFMEKAKKNGVNFYMPVDVVVADDFSNDANIQVVSIEDIPSDWEGLDAGPKTREIYADVIKNSKLVIWNGPMGVFELDAFANGTKAVAEALAEATDTYSVIGGGDSAAAVEKFNLADKMSHISTGGGASLEFMEGKELPGVVALNDK.

Residues 21–23, R36, 59–62, R118, and R151 each bind substrate; these read DFN and HLGR. S183 is subject to Phosphoserine. K201 and G292 together coordinate ATP. Phosphothreonine is present on T299. ATP-binding positions include E323 and 350 to 353; that span reads GGDS.

This sequence belongs to the phosphoglycerate kinase family. In terms of assembly, monomer.

The protein localises to the cytoplasm. It carries out the reaction (2R)-3-phosphoglycerate + ATP = (2R)-3-phospho-glyceroyl phosphate + ADP. The protein operates within carbohydrate degradation; glycolysis; pyruvate from D-glyceraldehyde 3-phosphate: step 2/5. This is Phosphoglycerate kinase (pgk) from Priestia megaterium (strain DSM 319 / IMG 1521) (Bacillus megaterium).